Reading from the N-terminus, the 650-residue chain is DNA ligase (650 aa).

Residues 30-34, 79-80, and Asp-108 each bind NAD(+); these read DEEYD and SL. Lys-110 functions as the N6-AMP-lysine intermediate in the catalytic mechanism. 3 residues coordinate NAD(+): Arg-131, Glu-165, and Lys-304. 4 residues coordinate Zn(2+): Cys-398, Cys-401, Cys-414, and Cys-419. Residues 573 to 650 form the BRCT domain; that stretch reads PQDSPIAGKS…EEELGEILES (78 aa).

This sequence belongs to the NAD-dependent DNA ligase family. LigA subfamily. It depends on Mg(2+) as a cofactor. Mn(2+) is required as a cofactor.

The enzyme catalyses NAD(+) + (deoxyribonucleotide)n-3'-hydroxyl + 5'-phospho-(deoxyribonucleotide)m = (deoxyribonucleotide)n+m + AMP + beta-nicotinamide D-nucleotide.. Its function is as follows. DNA ligase that catalyzes the formation of phosphodiester linkages between 5'-phosphoryl and 3'-hydroxyl groups in double-stranded DNA using NAD as a coenzyme and as the energy source for the reaction. It is essential for DNA replication and repair of damaged DNA. This chain is DNA ligase, found in Wolinella succinogenes (strain ATCC 29543 / DSM 1740 / CCUG 13145 / JCM 31913 / LMG 7466 / NCTC 11488 / FDC 602W) (Vibrio succinogenes).